Reading from the N-terminus, the 112-residue chain is Peptidyl-tRNA hydrolase (112 aa).

Belongs to the PTH2 family.

It localises to the cytoplasm. The catalysed reaction is an N-acyl-L-alpha-aminoacyl-tRNA + H2O = an N-acyl-L-amino acid + a tRNA + H(+). In terms of biological role, the natural substrate for this enzyme may be peptidyl-tRNAs which drop off the ribosome during protein synthesis. In Methanothermobacter thermautotrophicus (strain ATCC 29096 / DSM 1053 / JCM 10044 / NBRC 100330 / Delta H) (Methanobacterium thermoautotrophicum), this protein is Peptidyl-tRNA hydrolase.